The sequence spans 315 residues: Methionyl-tRNA formyltransferase (315 aa).

113 to 116 serves as a coordination point for (6S)-5,6,7,8-tetrahydrofolate; sequence SLLP.

Belongs to the Fmt family.

The enzyme catalyses L-methionyl-tRNA(fMet) + (6R)-10-formyltetrahydrofolate = N-formyl-L-methionyl-tRNA(fMet) + (6S)-5,6,7,8-tetrahydrofolate + H(+). Attaches a formyl group to the free amino group of methionyl-tRNA(fMet). The formyl group appears to play a dual role in the initiator identity of N-formylmethionyl-tRNA by promoting its recognition by IF2 and preventing the misappropriation of this tRNA by the elongation apparatus. The polypeptide is Methionyl-tRNA formyltransferase (Pectobacterium atrosepticum (strain SCRI 1043 / ATCC BAA-672) (Erwinia carotovora subsp. atroseptica)).